A 359-amino-acid chain; its full sequence is Peptide chain release factor 1 (359 aa).

Gln-236 carries the post-translational modification N5-methylglutamine.

This sequence belongs to the prokaryotic/mitochondrial release factor family. Methylated by PrmC. Methylation increases the termination efficiency of RF1.

It is found in the cytoplasm. Functionally, peptide chain release factor 1 directs the termination of translation in response to the peptide chain termination codons UAG and UAA. This is Peptide chain release factor 1 from Streptococcus mutans serotype c (strain ATCC 700610 / UA159).